The primary structure comprises 201 residues: Recombination protein RecR (201 aa).

The C4-type zinc-finger motif lies at 60–75 (CSRCGNVDTVDPCTVC). Residues 83-178 (SIIIVVEDVS…KITRLAHGVP (96 aa)) form the Toprim domain.

This sequence belongs to the RecR family.

May play a role in DNA repair. It seems to be involved in an RecBC-independent recombinational process of DNA repair. It may act with RecF and RecO. The protein is Recombination protein RecR of Rhizobium leguminosarum bv. trifolii (strain WSM2304).